The primary structure comprises 298 residues: Enoyl-CoA hydratase AKT6-1 (298 aa).

The tract at residues M1 to N23 is disordered.

This sequence belongs to the enoyl-CoA hydratase/isomerase family.

The protein operates within mycotoxin biosynthesis. In terms of biological role, enoyl-CoA hydratase; part of the gene clusters that mediate the biosynthesis of the host-selective toxins (HSTs) AK-toxins responsible for Japanese pear black spot disease by the Japanese pear pathotype. AK-toxins are esters of 9,10-epoxy 8-hydroxy 9-methyldecatrienoic acid (EDA). On cellular level, AK-toxins affect plasma membrane of susceptible cells and cause a sudden increase in loss of K(+) after a few minutes of toxin treatment. The acyl-CoA ligase AKT1, the hydrolase AKT2 and enoyl-CoA hydratase AKT3 are all involved in the biosynthesis of the AK-, AF- and ACT-toxin common 9,10-epoxy-8-hydroxy-9-methyl-decatrienoic acid (EDA) structural moiety. Part of the EDA biosynthesis occurs in the peroxisome since these 3 enzymes are localized in peroxisomes. The exact roles of the 3 enzymes, as well as of additional AK-toxin clusters enzymes, including AKT4, AKT6 and AKTS1, have still to be elucidated. The Cytochrome P450 monooxygenase AKT7 on the other side functions to limit production of EDA and AK-toxin, probably via the catalysis of a side reaction of EDA or its precursor. This is Enoyl-CoA hydratase AKT6-1 from Alternaria alternata (Alternaria rot fungus).